A 348-amino-acid polypeptide reads, in one-letter code: GTPase Obg (348 aa).

In terms of domain architecture, Obg spans 1–159 (MKFVDEVKVH…RELVLELKLM (159 aa)). Residues 160-331 (ADVGLVGLPN…LLSALVRILS (172 aa)) form the OBG-type G domain. Residues 166–173 (GLPNAGKS), 191–195 (FTTLI), 213–216 (DIPG), 283–286 (NKVD), and 312–314 (SAR) each bind GTP. Residues serine 173 and threonine 193 each contribute to the Mg(2+) site.

Belongs to the TRAFAC class OBG-HflX-like GTPase superfamily. OBG GTPase family. Monomer. Mg(2+) is required as a cofactor.

The protein localises to the cytoplasm. An essential GTPase which binds GTP, GDP and possibly (p)ppGpp with moderate affinity, with high nucleotide exchange rates and a fairly low GTP hydrolysis rate. Plays a role in control of the cell cycle, stress response, ribosome biogenesis and in those bacteria that undergo differentiation, in morphogenesis control. This is GTPase Obg from Syntrophobacter fumaroxidans (strain DSM 10017 / MPOB).